We begin with the raw amino-acid sequence, 229 residues long: 23 kDa piroplasm membrane protein (229 aa).

The signal sequence occupies residues 1–19; sequence MNKYFKVFFFVLLTHALKS. At 20 to 203 the chain is on the extracellular side; the sequence is SLIFGQATLQ…EKEETSKKKY (184 aa). The helical transmembrane segment at 204–224 threads the bilayer; the sequence is VLMVVVVVVFVVVASLVVFLV. Residues 225–229 are Cytoplasmic-facing; it reads KFCLK.

The protein localises to the membrane. This Theileria annulata protein is 23 kDa piroplasm membrane protein.